A 628-amino-acid chain; its full sequence is E3 SUMO-protein ligase PIAS3 (628 aa).

The interaction with CCAR2 stretch occupies residues 1-200; sequence MAELGELKHM…QLRFCLCETS (200 aa). The SAP domain maps to 11–45; it reads VMSFRVSELQVLLGFAGRNKSGRKHELLAKALHLL. An LXXLL motif motif is present at residues 19–23; sequence LQVLL. Glycyl lysine isopeptide (Lys-Gly) (interchain with G-Cter in SUMO2) cross-links involve residues Lys-46, Lys-56, Lys-230, and Lys-307. Positions 115 to 280 constitute a PINIT domain; sequence MHPPLPQPVH…SLSVYLVRQL (166 aa). The SP-RING-type zinc-finger motif lies at 312–393; that stretch reads PDSEVATTSL…FMEILSSCSD (82 aa). Zn(2+) is bound by residues Cys-343, His-345, Cys-366, and Cys-369. Positions 450–460 are SUMO1-binding; the sequence is LTIESSSDEED. Residues Lys-466 and Lys-482 each participate in a glycyl lysine isopeptide (Lys-Gly) (interchain with G-Cter in SUMO2) cross-link. The segment at 597–617 is disordered; that stretch reads VAPGGALREGHGGPLPSGPSL.

This sequence belongs to the PIAS family. Monomer. Binds SUMO1 and UBE2I. Interacts with BCL11A, HMGA2, IRF1, MITF and NCOA2. Interacts with STAT5; the interaction occurs on stimulation by PRL. Interacts with GFI1; the interaction relieves the inhibitory effect of PIAS3 on STAT3-mediated transcriptional activity. Interacts with AR, PLAG1 and ZFHX3. Interacts with STAT3; the interaction occurs on stimulation by IL6, CNTF or OSM and inhibits the DNA binding activity of STAT3. Interacts with MTA1. Interacts with CCAR2 (via N-terminus). Interacts with TRIM8. Interacts with PRDM1/Blimp-1. Sumoylated. In terms of tissue distribution, widely expressed.

Its subcellular location is the cytoplasm. The protein localises to the nucleus. It localises to the nucleus speckle. It functions in the pathway protein modification; protein sumoylation. Its function is as follows. Functions as an E3-type small ubiquitin-like modifier (SUMO) ligase, stabilizing the interaction between UBE2I and the substrate, and as a SUMO-tethering factor. Plays a crucial role as a transcriptional coregulation in various cellular pathways, including the STAT pathway and the steroid hormone signaling pathway. Involved in regulating STAT3 signaling via inhibiting STAT3 DNA-binding and suppressing cell growth. Enhances the sumoylation of MTA1 and may participate in its paralog-selective sumoylation. Sumoylates CCAR2 which promotes its interaction with SIRT1. Diminishes the sumoylation of ZFHX3 by preventing the colocalization of ZFHX3 with SUMO1 in the nucleus. The chain is E3 SUMO-protein ligase PIAS3 (PIAS3) from Homo sapiens (Human).